Consider the following 2373-residue polypeptide: Highly reducing polyketide synthase (2373 aa).

One can recognise a Ketosynthase family 3 (KS3) domain in the interval 19-446; it reads QEPIAVVGIA…GSNAHVIVEE (428 aa). Active-site for beta-ketoacyl synthase activity residues include Cys-192, His-329, and His-369. The segment at 560-874 is malonyl-CoA:ACP transacylase (MAT) domain; sequence IFTGQGAQWP…QYTSAMARGA (315 aa). Ser-652 serves as the catalytic For malonyltransferase activity. Residues 942–1078 are N-terminal hotdog fold; that stretch reads HDLLGSKVLG…GLIRIDEDVP (137 aa). The dehydratase (DH) domain stretch occupies residues 942–1241; that stretch reads HDLLGSKVLG…LSGLRYTRID (300 aa). The 305-residue stretch at 942 to 1246 folds into the PKS/mFAS DH domain; that stretch reads HDLLGSKVLG…YTRIDTGPSV (305 aa). The active-site Proton acceptor; for dehydratase activity is His-974. A C-terminal hotdog fold region spans residues 1090–1246; the sequence is SHQVDASLWH…YTRIDTGPSV (157 aa). Residue Asp-1154 is the Proton donor; for dehydratase activity of the active site. Residues 1669–1985 are enoyl reductase (ER) domain; that stretch reads GTTDSLIYSE…SANHIGKIVI (317 aa). The segment at 2010 to 2187 is ketoreductase (KR) domain; it reads GYLLIGGLKG…NSVDLGAIQD (178 aa). The region spanning 2294-2370 is the Carrier domain; sequence AIHDAVIDVT…QLAQKIVARL (77 aa). The residue at position 2330 (Ser-2330) is an O-(pantetheine 4'-phosphoryl)serine.

Pantetheine 4'-phosphate is required as a cofactor.

It participates in mycotoxin biosynthesis. Functionally, highly reducing polyketide synthase; part of the gene cluster that mediates the biosynthesis of brefeldin A (BFA), a protein transport inhibitor that shows antiviral, antifungal, and antitumor properties. The proposed biosynthesis of BFA involves formation of an acyclic polyketide chain that is differentially tailored throughout the backbone. The highly reducing polyketide synthase Bref-PKS is proposed to synthesize the precisely reduced octaketide precursor, which could then be directly offloaded by the thiohydrolase enzyme Bref-TH followed by a cytochrome P450 monooxygenase-mediated formation of the cyclopentane ring and macrocyclization to afford 7-deoxy BFA. Alternatively, the first ring annulation can also occur on the ACP-tethered intermediate before the thiohydrolase release and lactonization. The C7-hydroxylation by another cytochrome P450 monooxygenase is believed to be the final step in the process to obtain the final structure of BFA. In addition to the HRPKS Bref-PKS and the thiohydrolase Bref-TH, the brefeldin A biosynthesis cluster contains 4 cytochrome p450 monooxygenases (called orf3 to orf6), as well a the probable cluster-specific transcription regulator orf8. This chain is Highly reducing polyketide synthase, found in Eupenicillium brefeldianum (Penicillium brefeldianum).